A 542-amino-acid polypeptide reads, in one-letter code: Isocitrate lyase (542 aa).

102–104 (SGW) lines the substrate pocket. Residue D170 coordinates Mg(2+). C208 acts as the Proton acceptor in catalysis. Substrate-binding positions include 209–210 (GH), R245, 428–432 (NLSPS), and T462.

This sequence belongs to the isocitrate lyase/PEP mutase superfamily. Isocitrate lyase family. As to quaternary structure, homotetramer. Requires Mg(2+) as cofactor.

The protein resides in the glyoxysome. The enzyme catalyses D-threo-isocitrate = glyoxylate + succinate. It catalyses the reaction (2S,3R)-3-hydroxybutane-1,2,3-tricarboxylate = pyruvate + succinate. It functions in the pathway carbohydrate metabolism; glyoxylate cycle; (S)-malate from isocitrate: step 1/2. Catalyzes the formation of succinate and glyoxylate from isocitrate, a key step of the glyoxylate cycle, which operates as an anaplerotic route for replenishing the tricarboxylic acid cycle. Required for growth on ethanol or acetate, but dispensable when fermentable carbon sources are available. Also acts on 2-methylisocitrate. The chain is Isocitrate lyase from Kluyveromyces lactis (strain ATCC 8585 / CBS 2359 / DSM 70799 / NBRC 1267 / NRRL Y-1140 / WM37) (Yeast).